Consider the following 599-residue polypeptide: Leishmanolysin (599 aa).

The signal sequence occupies residues 1 to 39 (MSVDSSSTHRHRSVAARLVRLAAAGAAVIAAVGTAAAWA). The propeptide at 40-97 (HAGAVQHRCIHDAMQARVRQSVARHHTAPGAVSAVGLPYVTLDTAAAADRRPGSAPTV) is activation peptide. Intrachain disulfides connect Cys-122–Cys-139 and Cys-188–Cys-227. His-261 serves as a coordination point for Zn(2+). Glu-262 is an active-site residue. His-265 is a Zn(2+) binding site. N-linked (GlcNAc...) asparagine glycosylation is present at Asn-297. Disulfide bonds link Cys-311–Cys-383, Cys-390–Cys-452, Cys-403–Cys-422, Cys-412–Cys-486, Cys-463–Cys-507, Cys-512–Cys-562, and Cys-532–Cys-555. Residue His-331 participates in Zn(2+) binding. An N-linked (GlcNAc...) asparagine glycan is attached at Asn-394. Residue Asn-574 is the site of GPI-anchor amidated asparagine attachment. The propeptide at 575–599 (AAAGRRGPRAAATALLVAALLAVAL) is removed in mature form.

This sequence belongs to the peptidase M8 family. The cofactor is Zn(2+).

It localises to the cell membrane. It catalyses the reaction Preference for hydrophobic residues at P1 and P1' and basic residues at P2' and P3'. A model nonapeptide is cleaved at -Ala-Tyr-|-Leu-Lys-Lys-.. Functionally, has an integral role during the infection of macrophages in the mammalian host. This chain is Leishmanolysin (gp63), found in Leishmania chagasi.